A 268-amino-acid polypeptide reads, in one-letter code: Malonyl-[acyl-carrier protein] O-methyltransferase (268 aa).

This sequence belongs to the methyltransferase superfamily.

The catalysed reaction is malonyl-[ACP] + S-adenosyl-L-methionine = malonyl-[ACP] methyl ester + S-adenosyl-L-homocysteine. It functions in the pathway cofactor biosynthesis; biotin biosynthesis. Functionally, converts the free carboxyl group of a malonyl-thioester to its methyl ester by transfer of a methyl group from S-adenosyl-L-methionine (SAM). It allows to synthesize pimeloyl-ACP via the fatty acid synthetic pathway. This is Malonyl-[acyl-carrier protein] O-methyltransferase from Prosthecochloris aestuarii (strain DSM 271 / SK 413).